The sequence spans 32 residues: Delta-conotoxin-like MVID (32 aa).

3 cysteine pairs are disulfide-bonded: C3/C18, C10/C22, and C17/C27. P14 carries the post-translational modification 4-hydroxyproline.

This sequence belongs to the conotoxin O1 superfamily. As to expression, expressed by the venom duct.

Its subcellular location is the secreted. Its function is as follows. Delta-conotoxins bind to site 6 of voltage-gated sodium channels (Nav) and inhibit the inactivation process. This Conus magus (Magical cone) protein is Delta-conotoxin-like MVID.